The following is a 116-amino-acid chain: Large ribosomal subunit protein uL18 (116 aa).

This sequence belongs to the universal ribosomal protein uL18 family. In terms of assembly, part of the 50S ribosomal subunit; part of the 5S rRNA/L5/L18/L25 subcomplex. Contacts the 5S and 23S rRNAs.

In terms of biological role, this is one of the proteins that bind and probably mediate the attachment of the 5S RNA into the large ribosomal subunit, where it forms part of the central protuberance. In Saccharophagus degradans (strain 2-40 / ATCC 43961 / DSM 17024), this protein is Large ribosomal subunit protein uL18.